The primary structure comprises 494 residues: Ubiquitin carboxyl-terminal hydrolase 14 (494 aa).

The 77-residue stretch at 4-80 folds into the Ubiquitin-like domain; sequence YSVTVKWGKE…MMGSADALPE (77 aa). The residue at position 52 (Thr-52) is a Phosphothreonine. A USP domain is found at 105-483; that stretch reads CGLTNLGNTC…IAYVLLYGPR (379 aa). Cys-114 functions as the Nucleophile in the catalytic mechanism. A phosphoserine mark is found at Ser-143 and Ser-148. Residue Thr-235 is modified to Phosphothreonine. Ser-237, Ser-302, and Ser-432 each carry phosphoserine. His-435 serves as the catalytic Proton acceptor. N6-acetyllysine is present on Lys-449.

Belongs to the peptidase C19 family. USP14/UBP6 subfamily. In terms of assembly, homodimer (Potential). Associates with the 26S proteasome. Interacts with FANCC, CXCR4 and ERN1. Interacts with TRIM14; this interaction recruits USP14 to cleave ubiquitin chains of CGAS and KDM4D.

The protein resides in the cytoplasm. Its subcellular location is the cell membrane. It catalyses the reaction Thiol-dependent hydrolysis of ester, thioester, amide, peptide and isopeptide bonds formed by the C-terminal Gly of ubiquitin (a 76-residue protein attached to proteins as an intracellular targeting signal).. Its function is as follows. Proteasome-associated deubiquitinase which releases ubiquitin from the proteasome targeted ubiquitinated proteins. Ensures the regeneration of ubiquitin at the proteasome. Is a reversibly associated subunit of the proteasome and a large fraction of proteasome-free protein exists within the cell. Required for the degradation of the chemokine receptor CXCR4 which is critical for CXCL12-induced cell chemotaxis. Also serves as a physiological inhibitor of endoplasmic reticulum-associated degradation (ERAD) under the non-stressed condition by inhibiting the degradation of unfolded endoplasmic reticulum proteins via interaction with ERN1. Indispensable for synaptic development and function at neuromuscular junctions (NMJs). Plays a role in the innate immune defense against viruses by stabilizing the viral DNA sensor CGAS and thus inhibiting its autophagic degradation. Inhibits OPTN-mediated selective autophagic degradation of KDM4D and thereby negatively regulates H3K9me2 and H3K9me3. This chain is Ubiquitin carboxyl-terminal hydrolase 14 (USP14), found in Homo sapiens (Human).